Consider the following 95-residue polypeptide: Large ribosomal subunit protein eL30 (95 aa).

It belongs to the eukaryotic ribosomal protein eL30 family.

This is Large ribosomal subunit protein eL30 from Methanospirillum hungatei JF-1 (strain ATCC 27890 / DSM 864 / NBRC 100397 / JF-1).